The following is a 476-amino-acid chain: UDP-N-acetylmuramate--L-alanine ligase (476 aa).

107–113 contributes to the ATP binding site; it reads GTHGKTT.

This sequence belongs to the MurCDEF family.

It localises to the cytoplasm. It catalyses the reaction UDP-N-acetyl-alpha-D-muramate + L-alanine + ATP = UDP-N-acetyl-alpha-D-muramoyl-L-alanine + ADP + phosphate + H(+). The protein operates within cell wall biogenesis; peptidoglycan biosynthesis. In terms of biological role, cell wall formation. This Roseiflexus castenholzii (strain DSM 13941 / HLO8) protein is UDP-N-acetylmuramate--L-alanine ligase.